A 206-amino-acid chain; its full sequence is Dephospho-CoA kinase (206 aa).

One can recognise a DPCK domain in the interval 4–204 (VIGLTGGIAS…EGYIESHSED (201 aa)). 12 to 17 (ASGKST) lines the ATP pocket.

Belongs to the CoaE family.

It is found in the cytoplasm. The enzyme catalyses 3'-dephospho-CoA + ATP = ADP + CoA + H(+). The protein operates within cofactor biosynthesis; coenzyme A biosynthesis; CoA from (R)-pantothenate: step 5/5. Its function is as follows. Catalyzes the phosphorylation of the 3'-hydroxyl group of dephosphocoenzyme A to form coenzyme A. In Staphylococcus saprophyticus subsp. saprophyticus (strain ATCC 15305 / DSM 20229 / NCIMB 8711 / NCTC 7292 / S-41), this protein is Dephospho-CoA kinase.